Reading from the N-terminus, the 148-residue chain is Cytochrome c oxidase subunit 6, mitochondrial (148 aa).

The transit peptide at 1 to 40 (MLSRAIFRNPVINRTLLRARPGAYHATRLTKNTFIQSRKY) directs the protein to the mitochondrion.

The protein belongs to the cytochrome c oxidase subunit 5A family. Component of the cytochrome c oxidase (complex IV, CIV), a multisubunit enzyme composed of 12 subunits. The complex is composed of a catalytic core of 3 subunits COX1, COX2 and COX3, encoded in the mitochondrial DNA, and 9 supernumerary subunits COX4, COX5A (or COX5B), COX6, COX7, COX8, COX9, COX12, COX13 and COX26, which are encoded in the nuclear genome. The complex exists as a monomer or a dimer and forms supercomplexes (SCs) in the inner mitochondrial membrane with a dimer of ubiquinol-cytochrome c oxidoreductase (cytochrome b-c1 complex, complex III, CIII), resulting in 2 different assemblies (supercomplexes III(2)IV and III(2)IV(2)). COX26 interacts with COX1, COX2, COX6 and COX9.

It is found in the mitochondrion inner membrane. Its pathway is energy metabolism; oxidative phosphorylation. In terms of biological role, component of the cytochrome c oxidase, the last enzyme in the mitochondrial electron transport chain which drives oxidative phosphorylation. The respiratory chain contains 3 multisubunit complexes succinate dehydrogenase (complex II, CII), ubiquinol-cytochrome c oxidoreductase (cytochrome b-c1 complex, complex III, CIII) and cytochrome c oxidase (complex IV, CIV), that cooperate to transfer electrons derived from NADH and succinate to molecular oxygen, creating an electrochemical gradient over the inner membrane that drives transmembrane transport and the ATP synthase. Cytochrome c oxidase is the component of the respiratory chain that catalyzes the reduction of oxygen to water. Electrons originating from reduced cytochrome c in the intermembrane space (IMS) are transferred via the dinuclear copper A center (CU(A)) of COX2 and heme A of COX1 to the active site in COX1, a binuclear center (BNC) formed by heme A3 and copper B (CU(B)). The BNC reduces molecular oxygen to 2 water molecules using 4 electrons from cytochrome c in the IMS and 4 protons from the mitochondrial matrix. COX6 may stabilize the region of CIV at the interface with CIII, supporting a role in formation or stability of the CIII(2)IV(2) SC. The polypeptide is Cytochrome c oxidase subunit 6, mitochondrial (COX6) (Saccharomyces cerevisiae (strain ATCC 204508 / S288c) (Baker's yeast)).